Reading from the N-terminus, the 411-residue chain is LL-diaminopimelate aminotransferase (411 aa).

Substrate contacts are provided by Tyr15 and Gly42. Pyridoxal 5'-phosphate is bound by residues Tyr72, 108-109 (SK), Tyr132, Asn187, Tyr218, and 246-248 (SFS). Substrate-binding residues include Lys109, Tyr132, and Asn187. An N6-(pyridoxal phosphate)lysine modification is found at Lys249. Pyridoxal 5'-phosphate-binding residues include Arg257 and Asn292. Substrate contacts are provided by Asn292 and Arg388.

The protein belongs to the class-I pyridoxal-phosphate-dependent aminotransferase family. LL-diaminopimelate aminotransferase subfamily. As to quaternary structure, homodimer. Pyridoxal 5'-phosphate serves as cofactor.

The catalysed reaction is (2S,6S)-2,6-diaminopimelate + 2-oxoglutarate = (S)-2,3,4,5-tetrahydrodipicolinate + L-glutamate + H2O + H(+). The protein operates within amino-acid biosynthesis; L-lysine biosynthesis via DAP pathway; LL-2,6-diaminopimelate from (S)-tetrahydrodipicolinate (aminotransferase route): step 1/1. Involved in the synthesis of meso-diaminopimelate (m-DAP or DL-DAP), required for both lysine and peptidoglycan biosynthesis. Catalyzes the direct conversion of tetrahydrodipicolinate to LL-diaminopimelate. In Trichodesmium erythraeum (strain IMS101), this protein is LL-diaminopimelate aminotransferase.